The following is a 466-amino-acid chain: Hydroxyproline dehydrogenase (466 aa).

It belongs to the proline oxidase family. Requires FAD as cofactor.

The enzyme catalyses trans-4-hydroxy-L-proline + a quinone = (3R,5S)-1-pyrroline-3-hydroxy-5-carboxylate + a quinol + H(+). It catalyses the reaction L-proline + a quinone = (S)-1-pyrroline-5-carboxylate + a quinol + H(+). It participates in amino-acid degradation; L-proline degradation into L-glutamate; L-glutamate from L-proline: step 1/2. Functionally, dehydrogenase that converts trans-4-L-hydroxyproline to delta-1-pyrroline-3-hydroxy-5-carboxylate (Hyp) using a quinone as the terminal electron acceptor. Can also use proline as a substrate but with a very much lower efficiency. Does not react with other diastereomers of Hyp: trans-4-D-hydroxyproline and cis-4-L-hydroxyproline. In Xenopus laevis (African clawed frog), this protein is Hydroxyproline dehydrogenase (prodh2).